We begin with the raw amino-acid sequence, 55 residues long: Preprotein translocase subunit SecG (55 aa).

At 1-29 the chain is on the cytoplasmic side; sequence MAKKSGSGLQSSAGLMRYYEADKNAVQVQ. A helical membrane pass occupies residues 30–51; sequence PKVVLIVGAIVGIAVLFLSAVN. Over 52–55 the chain is Extracellular; that stretch reads GFWP.

This sequence belongs to the SEC61-beta family. In terms of assembly, component of the protein translocase complex. Heterotrimer consisting of alpha (SecY), beta (SecG) and gamma (SecE) subunits. Can form oligomers of the heterotrimer.

The protein localises to the cell membrane. In terms of biological role, involved in protein export. The function of the beta subunit is unknown, but it may be involved in stabilization of the trimeric complex. In Methanosarcina barkeri (strain Fusaro / DSM 804), this protein is Preprotein translocase subunit SecG.